A 469-amino-acid polypeptide reads, in one-letter code: MSAVNTPAGFTDYKVADISLAAWGRRETIIAESEMPALMGLRRKYLAEQPLKGAKILGCIHMTIQTAVLIETLVALGAEVRWSSCNIFSTQDQAAASIAAAGIPVFAWKGETEEEYEWCLEQTILKDGKPWDANMILDDGGDLTQLLHDKYPQVLDRVHGVTEETTTGVHRLLDMLAKGELKVPAINVNDSVTKSKNDNKYGCRHSLNDAIKRGTDHLLSGKQALVIGYGDVGKGSAQSLRQEGMIVKVSEVDPICAMQACMDGFELVSPFIDGINHGTEASIDKALLGKIDLIVTTTGNVNVCDANMLKALKKRAVVCNIGHFDNEIDTAFMRKNWAWEEVKPQVHKIHRTGPGDFDAQNDDYLILLAEGRLVNLGNATGHPSRIMDGSFANQVLAQIFLFGQKYADLSPAQKAERLTVEVLPKKLDEEVALEMVRGFGGVVTQLTKQQAEYIGVTVEGPFKPDAYRY.

Substrate is bound by residues Thr-63, Asp-139, and Glu-164. NAD(+) is bound at residue 165 to 167 (TTT). 2 residues coordinate substrate: Lys-194 and Asp-198. NAD(+) is bound by residues Asn-199, 228–233 (GYGDVG), Glu-251, Asn-300, 321–323 (IGH), and Asn-375.

The protein belongs to the adenosylhomocysteinase family. The cofactor is NAD(+).

The protein resides in the cytoplasm. The catalysed reaction is S-adenosyl-L-homocysteine + H2O = L-homocysteine + adenosine. The protein operates within amino-acid biosynthesis; L-homocysteine biosynthesis; L-homocysteine from S-adenosyl-L-homocysteine: step 1/1. In terms of biological role, may play a key role in the regulation of the intracellular concentration of adenosylhomocysteine. This is Adenosylhomocysteinase from Pseudomonas fluorescens (strain ATCC BAA-477 / NRRL B-23932 / Pf-5).